The chain runs to 462 residues: Arginine biosynthesis bifunctional protein ArgJ, mitochondrial (462 aa).

Substrate is bound by residues Thr189, Lys215, Thr236, Glu327, Asn457, and Ser462. The active-site Nucleophile is Thr236.

This sequence belongs to the ArgJ family. In terms of assembly, heterodimer of an alpha and a beta chain. In terms of processing, the alpha and beta chains are autoproteolytically processed from a single precursor protein within the mitochondrion.

The protein resides in the mitochondrion matrix. The catalysed reaction is N(2)-acetyl-L-ornithine + L-glutamate = N-acetyl-L-glutamate + L-ornithine. It catalyses the reaction L-glutamate + acetyl-CoA = N-acetyl-L-glutamate + CoA + H(+). Its pathway is amino-acid biosynthesis; L-arginine biosynthesis; L-ornithine and N-acetyl-L-glutamate from L-glutamate and N(2)-acetyl-L-ornithine (cyclic): step 1/1. It participates in amino-acid biosynthesis; L-arginine biosynthesis; N(2)-acetyl-L-ornithine from L-glutamate: step 1/4. Catalyzes two activities which are involved in the cyclic version of arginine biosynthesis: the synthesis of acetylglutamate from glutamate and acetyl-CoA, and of ornithine by transacetylation between acetylornithine and glutamate. This is Arginine biosynthesis bifunctional protein ArgJ, mitochondrial from Postia placenta (strain ATCC 44394 / Madison 698-R) (Brown rot fungus).